The sequence spans 305 residues: Tyrosine recombinase XerC (305 aa).

The region spanning 4-95 is the Core-binding (CB) domain; that stretch reads TSIQALINKW…AVKNFYRFLE (92 aa). The 183-residue stretch at 116–298 folds into the Tyr recombinase domain; it reads LLPKALSEDD…SIKHLEAVYT (183 aa). Residues arginine 159, lysine 182, histidine 250, arginine 253, and histidine 276 contribute to the active site. Tyrosine 285 (O-(3'-phospho-DNA)-tyrosine intermediate) is an active-site residue.

It belongs to the 'phage' integrase family. XerC subfamily. As to quaternary structure, forms a cyclic heterotetrameric complex composed of two molecules of XerC and two molecules of XerD.

The protein localises to the cytoplasm. Site-specific tyrosine recombinase, which acts by catalyzing the cutting and rejoining of the recombining DNA molecules. The XerC-XerD complex is essential to convert dimers of the bacterial chromosome into monomers to permit their segregation at cell division. It also contributes to the segregational stability of plasmids. This Rickettsia rickettsii (strain Iowa) protein is Tyrosine recombinase XerC.